A 266-amino-acid chain; its full sequence is MAAVRVLVSPRLASALLPLSGRHRTTSQRAAIHSSAPRPRARVALVLSGCGVYDGTEIHEASAILVHLSRGGAEVHIFAPDVPQMHVIDHTKGEPSEKESRNVLAESARIARGKITNLAQLSAANHDAAIFPGGFGAAKNLSTFAVDGKDCKVNKEVERVLKEFHGAKKPIGLCCIAPVLAAKVIKGVEVTVGHEQEEGGKWPYAGTAEAVKALGAKHCVKGVTEAHVDQKNKVVTTPAFMCETELHHIHDGIGAMVKKVLELTGK.

The transit peptide at 1–39 directs the protein to the mitochondrion; sequence MAAVRVLVSPRLASALLPLSGRHRTTSQRAAIHSSAPRP. 3 positions are modified to N6-acetyllysine: Lys-149, Lys-155, and Lys-162. Position 201 is an N6-acetyllysine; alternate (Lys-201). N6-succinyllysine; alternate is present on Lys-201. Lys-217 carries the N6-acetyllysine modification. N6-acetyllysine; alternate is present on residues Lys-221 and Lys-231. Lys-221 and Lys-231 each carry N6-succinyllysine; alternate.

The protein belongs to the ES1 family.

The protein localises to the mitochondrion. The polypeptide is ES1 protein homolog, mitochondrial (Rattus norvegicus (Rat)).